Reading from the N-terminus, the 55-residue chain is Accessory gland-specific peptide 70A (55 aa).

The N-terminal stretch at 1–19 (MKTLALFLVLVCVLGLVQS) is a signal peptide. The segment at 20–33 (WEWPWNRKPTKFPI) is essential for binding to sperm. P28 and P32 each carry hydroxyproline. I33 bears the Isoleucine derivative mark. 3 positions are modified to hydroxyproline: P34, P36, and P38. The interval 36–55 (PNPRDKWCRLNLGPAWGGRC) is sufficient to induce PMR. C43 and C55 form a disulfide bridge.

It belongs to the Drosophila sex peptide family. Sperm-bound protein is cleaved to release an active C-terminal peptide. Gradual release from stored sperm may function to prolong PMR and enhance male reproductive success. Main cells of the accessory glands of males (paragonial gland).

The protein resides in the secreted. Male seminal protein which triggers short- and long-term post-mating behavioral responses (PMR) in female Drosophila. Binds initially to sperm where it is later cleaved to release an active peptide within the female reproductive tract. Signals via the sex peptide receptor (SPR) in female flies; may also act via other receptors. Moderates the activity of distinct neuronal circuitries in the female genital tract to promote specific PMRs including: enhanced ovulation, increased egg laying rate, increased feeding/foraging rate, induced antimicrobial peptide synthesis, reduced mating receptivity, reduced day-time sleep and reduced lifespan in multiple mated females. This chain is Accessory gland-specific peptide 70A (SP), found in Drosophila melanogaster (Fruit fly).